We begin with the raw amino-acid sequence, 333 residues long: Cytochrome f (333 aa).

The signal sequence occupies residues 1–16; sequence MRNVFRTARLTRSARA. Residues 17 to 36 form a helical membrane-spanning segment; sequence IVKTLLIAIATVTFYFTSDL. Heme contacts are provided by Tyr45, Cys66, Cys69, and His70. The helical transmembrane segment at 299 to 319 threads the bilayer; it reads VKWMIAFVALVMLAQVMLVLK.

This sequence belongs to the cytochrome f family. As to quaternary structure, the 4 large subunits of the cytochrome b6-f complex are cytochrome b6, subunit IV (17 kDa polypeptide, PetD), cytochrome f and the Rieske protein, while the 4 small subunits are PetG, PetL, PetM and PetN. The complex functions as a dimer. Heme serves as cofactor.

It localises to the cellular thylakoid membrane. In terms of biological role, component of the cytochrome b6-f complex, which mediates electron transfer between photosystem II (PSII) and photosystem I (PSI), cyclic electron flow around PSI, and state transitions. The polypeptide is Cytochrome f (Nostoc punctiforme (strain ATCC 29133 / PCC 73102)).